The primary structure comprises 470 residues: UDP-N-acetylmuramoylalanine--D-glutamate ligase (470 aa).

ATP is bound at residue 120–126 (GSNGKTT).

This sequence belongs to the MurCDEF family.

It is found in the cytoplasm. The enzyme catalyses UDP-N-acetyl-alpha-D-muramoyl-L-alanine + D-glutamate + ATP = UDP-N-acetyl-alpha-D-muramoyl-L-alanyl-D-glutamate + ADP + phosphate + H(+). Its pathway is cell wall biogenesis; peptidoglycan biosynthesis. Cell wall formation. Catalyzes the addition of glutamate to the nucleotide precursor UDP-N-acetylmuramoyl-L-alanine (UMA). This Nitrosomonas eutropha (strain DSM 101675 / C91 / Nm57) protein is UDP-N-acetylmuramoylalanine--D-glutamate ligase.